The sequence spans 381 residues: 3-isopropylmalate dehydrogenase (381 aa).

4 residues coordinate substrate: arginine 104, arginine 114, arginine 142, and aspartate 232. Aspartate 232, aspartate 256, and aspartate 260 together coordinate Mg(2+). An NAD(+)-binding site is contributed by 290–302 (GSAPDIAGQDKAN).

This sequence belongs to the isocitrate and isopropylmalate dehydrogenases family. LeuB type 1 subfamily. As to quaternary structure, homodimer. Requires Mg(2+) as cofactor. It depends on Mn(2+) as a cofactor.

It localises to the cytoplasm. The enzyme catalyses (2R,3S)-3-isopropylmalate + NAD(+) = 4-methyl-2-oxopentanoate + CO2 + NADH. It participates in amino-acid biosynthesis; L-leucine biosynthesis; L-leucine from 3-methyl-2-oxobutanoate: step 3/4. In terms of biological role, catalyzes the oxidation of 3-carboxy-2-hydroxy-4-methylpentanoate (3-isopropylmalate) to 3-carboxy-4-methyl-2-oxopentanoate. The product decarboxylates to 4-methyl-2 oxopentanoate. This is 3-isopropylmalate dehydrogenase from Synechococcus sp. (strain JA-3-3Ab) (Cyanobacteria bacterium Yellowstone A-Prime).